A 640-amino-acid polypeptide reads, in one-letter code: Probable potassium transport system protein Kup 1 (640 aa).

A run of 12 helical transmembrane segments spans residues 25–45 (LVLAALGVVYGDLGTSPLYAL), 65–85 (VVSLFLWSLILMVSVKYVMVL), 115–135 (AVGWVLLGLAGAAMLYGDGVI), 153–173 (PALAAYVVPATVVILAMLFMI), 181–201 (VGAAFGPILAAWFVAIAALGL), 227–247 (GFAGFVSLGAVVLCLTGAEAL), 263–283 (WYGLALPALILSYLGQGALLL), 305–325 (MVALSTLATIVASQALITAVF), 353–373 (IYLPLLNWTLMLATIAVVLGF), 381–401 (AAFGLAVSTTMAITTVLFAVL), 410–430 (WWAVALVAGSLFAIDLAFWLA), and 438–458 (GGWLPLLLGLAVFCVMGCWFG).

It belongs to the HAK/KUP transporter (TC 2.A.72) family.

Its subcellular location is the cell inner membrane. It catalyses the reaction K(+)(in) + H(+)(in) = K(+)(out) + H(+)(out). Functionally, transport of potassium into the cell. Likely operates as a K(+):H(+) symporter. The protein is Probable potassium transport system protein Kup 1 of Chromobacterium violaceum (strain ATCC 12472 / DSM 30191 / JCM 1249 / CCUG 213 / NBRC 12614 / NCIMB 9131 / NCTC 9757 / MK).